A 465-amino-acid chain; its full sequence is Gamma-aminobutyric acid receptor subunit rho-2 (465 aa).

Residues 1 to 20 (MPYLMRLALVLFCLMALVES) form the signal peptide. Over 21 to 260 (RKPRRKRWTG…LYINFTLRRH (240 aa)) the chain is Extracellular. Arg105 contacts 4-aminobutanoate. N-linked (GlcNAc...) asparagine glycosylation occurs at Asn120. Residue Ser169 coordinates 4-aminobutanoate. Cysteines 178 and 192 form a disulfide. Glu197 is a 4-aminobutanoate binding site. An N-linked (GlcNAc...) asparagine glycan is attached at Asn254. A helical membrane pass occupies residues 261–281 (IFFFLLQTYFPATLMVMLSWV). At 282-293 (SFWIDHRAVPAR) the chain is on the cytoplasmic side. A helical membrane pass occupies residues 294-314 (VSLGIMTVLTMSTIITGVNAS). The Extracellular portion of the chain corresponds to 315–325 (MPRVSYIRAVD). The chain crosses the membrane as a helical span at residues 326–346 (IYLWVSFVFVFLSVLEYAAVN). Residues 347 to 443 (YLTTLQEQKE…IFQNTHAIDK (97 aa)) are Cytoplasmic-facing. Residues 444 to 464 (YSRLIFPAFYIVFNLIYWSVF) traverse the membrane as a helical segment. Ser465 is a topological domain (extracellular).

Belongs to the ligand-gated ion channel (TC 1.A.9) family. Gamma-aminobutyric acid receptor (TC 1.A.9.5) subfamily. GABRR2 sub-subfamily. Three rho subunits (rho-1/GBRR1, rho-2/GBRR2 and rho-3/GBRR3) coassemble either to form functional homopentamers or heteropentamers. Rho-2 is unable to form a functional homopentamer. Interacts with SQSTM1. Expressed in the cerebellum.

The protein resides in the postsynaptic cell membrane. Its subcellular location is the cell membrane. The catalysed reaction is chloride(in) = chloride(out). Its function is as follows. Rho subunit of the pentameric ligand-gated chloride channels responsible for mediating the effects of gamma-aminobutyric acid (GABA), the major inhibitory neurotransmitter in the brain. Rho-containing GABA-gated chloride channels are a subclass of GABA(A) receptors (GABAARs) entirely composed of rho subunits, where GABA molecules bind at the rho intersubunit interfaces. When activated by GABA, rho-GABAARs selectively allow the flow of chloride anions across the cell membrane down their electrochemical gradient. Rho-2 GABAARs may contribute to the regulation of glial development in the cerebellum by controlling extrasynaptic transmission. Rho-2 GABAARs are also involved in neuronal tonic (extrasynaptic) and phasic (synaptic) transmission in the Purkinje neurons of the cerebellum. Rho-2 GABAARs expressed in retina may play a role in retinal neurotransmission. The protein is Gamma-aminobutyric acid receptor subunit rho-2 of Mus musculus (Mouse).